Reading from the N-terminus, the 123-residue chain is Keratin-associated protein 2-2 (123 aa).

An 11 X 5 AA repeats of C-C-[CDPQRWG]-[APRS]-[CIPSTVD] region spans residues 5 to 112; sequence CCGSTFSSLS…SVQSPCGQPT (108 aa).

Belongs to the KRTAP type 2 family. Interacts with hair keratins.

In the hair cortex, hair keratin intermediate filaments are embedded in an interfilamentous matrix, consisting of hair keratin-associated proteins (KRTAP), which are essential for the formation of a rigid and resistant hair shaft through their extensive disulfide bond cross-linking with abundant cysteine residues of hair keratins. The matrix proteins include the high-sulfur and high-glycine-tyrosine keratins. The chain is Keratin-associated protein 2-2 (KRTAP2-2) from Homo sapiens (Human).